The primary structure comprises 199 residues: Superoxide dismutase [Mn/Fe] (199 aa).

Positions 27, 81, 161, and 165 each coordinate Fe(3+). Mn(2+) is bound by residues His-27, His-81, Asp-161, and His-165.

The protein belongs to the iron/manganese superoxide dismutase family. As to quaternary structure, homodimer. Mn(2+) serves as cofactor. Fe(3+) is required as a cofactor.

The catalysed reaction is 2 superoxide + 2 H(+) = H2O2 + O2. Destroys superoxide anion radicals which are normally produced within the cells and which are toxic to biological systems. Catalyzes the dismutation of superoxide anion radicals into O2 and H2O2 by successive reduction and oxidation of the transition metal ion at the active site. The chain is Superoxide dismutase [Mn/Fe] (sodA) from Staphylococcus epidermidis (strain ATCC 35984 / DSM 28319 / BCRC 17069 / CCUG 31568 / BM 3577 / RP62A).